A 619-amino-acid polypeptide reads, in one-letter code: MALLQIAEPGQAAAPHQHRLAVGIDLGTTNSLVASVRSGQSVILNDEQERSLVPSVVHYGVEEKKVGLEAFEQASLDPKNTVISVKRLIGRSLPDVQSRYSSLPYEFVASENGLPLIITAQGPKSPIEVSSDILLRLNHIAEQRLGGELSGVVITVPAYFDDAQRQSTKDAARLAGLNVLRLLNEPTAAALAYGLDSGQEGIIAVYDLGGGTFDISILRLSKGIFEVLATGGDTALGGDDFDHLIADWVIEQTKLKPQTANQQRELITLANQAKITLTNEKSAVISWQDFSVEISREQFNELIYPLVKRSLLTCRRALKDANVESEEVQAVVMVGGSTRVPYVREQVGEFFGKTPLTSIDPDKVVALGAAIQADILVGNKTDSDMLLLDVVPLSLGIETMGGLVEKIIPRNTTIPVARAQEFTTFKDGQTAMSVHVLQGERELVDDCRSLGRFTLRGIPPMAAGAAHIRVTYQVDADGLLSVTAMEKSTKVQASIQIKPSYGLTDEEVTAMIKSSFDNAQEDLQARELAEQRVEADRVIESVIVALQADGAELLSTDEFHHIETVLKQLMDVKQGSDRDAIAQGIKALDTATQEFAARRMNASINKALTGKNLSDIENP.

This sequence belongs to the heat shock protein 70 family.

Functionally, chaperone involved in the maturation of iron-sulfur cluster-containing proteins. Has a low intrinsic ATPase activity which is markedly stimulated by HscB. This Haemophilus influenzae (strain PittEE) protein is Chaperone protein HscA homolog.